The chain runs to 431 residues: Glutamate-1-semialdehyde 2,1-aminomutase (431 aa).

Lysine 264 is subject to N6-(pyridoxal phosphate)lysine.

The protein belongs to the class-III pyridoxal-phosphate-dependent aminotransferase family. HemL subfamily. Homodimer. It depends on pyridoxal 5'-phosphate as a cofactor.

It is found in the cytoplasm. The catalysed reaction is (S)-4-amino-5-oxopentanoate = 5-aminolevulinate. The protein operates within porphyrin-containing compound metabolism; protoporphyrin-IX biosynthesis; 5-aminolevulinate from L-glutamyl-tRNA(Glu): step 2/2. The protein is Glutamate-1-semialdehyde 2,1-aminomutase of Clostridium beijerinckii (strain ATCC 51743 / NCIMB 8052) (Clostridium acetobutylicum).